Consider the following 173-residue polypeptide: MDIAIQHPWFKRALGPFYPSRLFDQFFGEGLFEYDLLPFLSSTISPYYRQSLFRTVLDSGVSEVRSDRDKFVIFLDVKHFSPEDLTVKVQEDFVEIHGKHNERQDDHGYISREFHRRYRLPSNVDQSALSCSLSADGMLTFSGPKVPSGVDAGHSERAIPVSREEKPSSAPTS.

N-acetylmethionine is present on M1. A required for complex formation with BFSP1 and BFSP2 region spans residues 1-63 (MDIAIQHPWF…RTVLDSGVSE (63 aa)). Position 6 is a deamidated glutamine; partial (Q6). S45 bears the Phosphoserine mark. At Q50 the chain carries Deamidated glutamine; partial. Positions 52-162 (LFRTVLDSGV…GHSERAIPVS (111 aa)) constitute a sHSP domain. K70 is modified (N6-acetyllysine). Zn(2+) is bound at residue H79. Q90 carries the deamidated glutamine; partial modification. K99 carries the N6-acetyllysine modification. H100 provides a ligand contact to Zn(2+). Deamidated asparagine; partial is present on N101. 2 residues coordinate Zn(2+): E102 and H107. At S122 the chain carries Phosphoserine. Residue N123 is modified to Deamidated asparagine; partial. The disordered stretch occupies residues 144–173 (PKVPSGVDAGHSERAIPVSREEKPSSAPTS). The span at 153 to 167 (GHSERAIPVSREEKP) shows a compositional bias: basic and acidic residues. H154 is a Zn(2+) binding site. S162 carries O-linked (GlcNAc) serine glycosylation.

It belongs to the small heat shock protein (HSP20) family. Heteromer composed of three CRYAA and one CRYAB subunits. Inter-subunit bridging via zinc ions enhances stability, which is crucial as there is no protein turn over in the lens. Can also form homodimers and homotetramers (dimers of dimers) which serve as the building blocks of homooligomers. Within homooligomers, the zinc-binding motif is created from residues of 3 different molecules. His-100 and Glu-102 from one molecule are ligands of the zinc ion, and His-107 and His-154 residues from additional molecules complete the site with tetrahedral coordination geometry. Part of a complex required for lens intermediate filament formation composed of BFSP1, BFSP2 and CRYAA. In terms of processing, acetylation at Lys-70 may increase chaperone activity. Post-translationally, undergoes age-dependent proteolytical cleavage at the C-terminus.

It is found in the cytoplasm. Its subcellular location is the nucleus. Contributes to the transparency and refractive index of the lens. Acts as a chaperone, preventing aggregation of various proteins under a wide range of stress conditions. Required for the correct formation of lens intermediate filaments as part of a complex composed of BFSP1, BFSP2 and CRYAA. The sequence is that of Alpha-crystallin A chain (CRYAA) from Sus scrofa (Pig).